Here is a 506-residue protein sequence, read N- to C-terminus: Kynurenine 3-monooxygenase (506 aa).

It belongs to the aromatic-ring hydroxylase family. KMO subfamily. The cofactor is FAD.

It is found in the mitochondrion outer membrane. It carries out the reaction L-kynurenine + NADPH + O2 + H(+) = 3-hydroxy-L-kynurenine + NADP(+) + H2O. The protein operates within cofactor biosynthesis; NAD(+) biosynthesis; quinolinate from L-kynurenine: step 1/3. Its function is as follows. Catalyzes the hydroxylation of L-kynurenine (L-Kyn) to form 3-hydroxy-L-kynurenine (L-3OHKyn). Required for synthesis of quinolinic acid. This Emericella nidulans (strain FGSC A4 / ATCC 38163 / CBS 112.46 / NRRL 194 / M139) (Aspergillus nidulans) protein is Kynurenine 3-monooxygenase (bna4).